The primary structure comprises 35 residues: Conotoxin Cal6.1g (35 aa).

Positions 1–8 are excised as a propeptide; sequence GLSRPSKR. Disulfide bonds link cysteine 9–cysteine 25, cysteine 16–cysteine 29, and cysteine 24–cysteine 34.

The protein belongs to the conotoxin O1 superfamily. In terms of tissue distribution, expressed by the venom duct.

It localises to the secreted. Probable neurotoxin with unknown target. Possibly targets ion channels. The chain is Conotoxin Cal6.1g from Californiconus californicus (California cone).